Consider the following 195-residue polypeptide: Probable nicotinate-nucleotide adenylyltransferase (195 aa).

This sequence belongs to the NadD family.

The catalysed reaction is nicotinate beta-D-ribonucleotide + ATP + H(+) = deamido-NAD(+) + diphosphate. It functions in the pathway cofactor biosynthesis; NAD(+) biosynthesis; deamido-NAD(+) from nicotinate D-ribonucleotide: step 1/1. Its function is as follows. Catalyzes the reversible adenylation of nicotinate mononucleotide (NaMN) to nicotinic acid adenine dinucleotide (NaAD). In Opitutus terrae (strain DSM 11246 / JCM 15787 / PB90-1), this protein is Probable nicotinate-nucleotide adenylyltransferase.